The primary structure comprises 274 residues: Rhamnulose-1-phosphate aldolase (274 aa).

The active site involves glutamate 117. Zn(2+) is bound by residues histidine 141, histidine 143, and histidine 212.

This sequence belongs to the aldolase class II family. RhaD subfamily. Homotetramer. It depends on Zn(2+) as a cofactor.

The protein resides in the cytoplasm. It catalyses the reaction L-rhamnulose 1-phosphate = (S)-lactaldehyde + dihydroxyacetone phosphate. The protein operates within carbohydrate degradation; L-rhamnose degradation; glycerone phosphate from L-rhamnose: step 3/3. Functionally, catalyzes the reversible cleavage of L-rhamnulose-1-phosphate to dihydroxyacetone phosphate (DHAP) and L-lactaldehyde. The chain is Rhamnulose-1-phosphate aldolase from Escherichia coli O127:H6 (strain E2348/69 / EPEC).